A 160-amino-acid polypeptide reads, in one-letter code: Ubiquitin-like protein ATG12 (160 aa).

The interval 1–40 is disordered; the sequence is MSETPKDQGPSSPSPSPSPSAASPMPLADNEVAGSGASSP. A Glycyl lysine isopeptide (Gly-Lys) (interchain with K-102 in ATG5) cross-link involves residue Gly160.

This sequence belongs to the ATG12 family. As to quaternary structure, forms a conjugate with ATG5. Forms a thioester bond with the 'Cys-196' of ATG10. Interacts with the ATG7 C-terminal 40 amino acids domain. The ATG12-ATG5 conjugate forms a complex with several units of ATG16. The ATG12-ATG5 conjugate also associates with ATG3.

It localises to the preautophagosomal structure membrane. In terms of biological role, ubiquitin-like protein involved in cytoplasm to vacuole transport (Cvt), autophagy vesicles formation, mitophagy, and nucleophagy. Conjugation with ATG5 through a ubiquitin-like conjugating system involving also ATG7 as an E1-like activating enzyme and ATG10 as an E2-like conjugating enzyme, is essential for its function. The ATG12-ATG5 conjugate acts as an E3-like enzyme which is required for lipidation of ATG8 and ATG8 association to the vesicle membranes. ATG12-ATG5 rearranges the ATG3 catalytic center and enhances its E2 activity. Autophagy is required for proper vegetative growth, asexual/sexual reproduction, and full virulence. Autophagy is particularly involved in the biosynthesis of deoxynivalenol (DON), an important virulence determinant. The chain is Ubiquitin-like protein ATG12 from Gibberella zeae (strain ATCC MYA-4620 / CBS 123657 / FGSC 9075 / NRRL 31084 / PH-1) (Wheat head blight fungus).